The chain runs to 592 residues: Aspartate--tRNA ligase (592 aa).

E173 is a binding site for L-aspartate. The interval 197–200 is aspartate; the sequence is QLFK. An L-aspartate-binding site is contributed by R219. ATP contacts are provided by residues 219–221 and Q228; that span reads RDE. H448 contacts L-aspartate. Position 482 (E482) interacts with ATP. Residue R489 participates in L-aspartate binding. ATP is bound at residue 534-537; the sequence is GLDR.

This sequence belongs to the class-II aminoacyl-tRNA synthetase family. Type 1 subfamily. As to quaternary structure, homodimer.

Its subcellular location is the cytoplasm. It catalyses the reaction tRNA(Asp) + L-aspartate + ATP = L-aspartyl-tRNA(Asp) + AMP + diphosphate. In terms of biological role, catalyzes the attachment of L-aspartate to tRNA(Asp) in a two-step reaction: L-aspartate is first activated by ATP to form Asp-AMP and then transferred to the acceptor end of tRNA(Asp). The sequence is that of Aspartate--tRNA ligase from Shewanella baltica (strain OS195).